Reading from the N-terminus, the 391-residue chain is Probable chaperonin-like protein PrmG (391 aa).

Residues 153 to 191 form a disordered region; sequence TTRWSVRSSPPPSNTSARTASSPPRRATHSGCRSRSSTA. The segment covering 154–174 has biased composition (polar residues); that stretch reads TRWSVRSSPPPSNTSARTASS.

This sequence belongs to the chaperonin (HSP60) family.

Probably plays an essential role in the productive folding of PrmA and PrmC, and thus in the formation of the active PrmABCD complex. This chain is Probable chaperonin-like protein PrmG, found in Gordonia sp. (strain TY-5).